Here is a 320-residue protein sequence, read N- to C-terminus: Protein rlx (320 aa).

In terms of biological role, this protein is probably required for relaxation complex formation and plasmid mobilization by conjugative plasmids. This is Protein rlx (rlx) from Staphylococcus aureus.